The sequence spans 130 residues: Protein MGF 360-1L (130 aa).

The next 3 helical transmembrane spans lie at 4 to 24 (FLGFLLLSYLAIILVHDNVNC), 75 to 95 (IIRHCCFYLVFSIAFASCVAF), and 109 to 129 (LLGLLSILVWLAQPVLNQPFP).

Belongs to the asfivirus MGF 110 family.

The protein resides in the host membrane. Functionally, plays a role in virus cell tropism, and may be required for efficient virus replication in macrophages. The sequence is that of Protein MGF 360-1L from Ornithodoros (relapsing fever ticks).